A 389-amino-acid chain; its full sequence is Probable dual-specificity RNA methyltransferase RlmN (389 aa).

Residues 1-23 (MTTQHPDTPETGITPGGTSGAFR) are disordered. Catalysis depends on glutamate 127, which acts as the Proton acceptor. Residues 133-376 (YPTRTTLCIS…ATLRDTRGQD (244 aa)) enclose the Radical SAM core domain. An intrachain disulfide couples cysteine 140 to cysteine 381. The [4Fe-4S] cluster site is built by cysteine 147, cysteine 151, and cysteine 154. S-adenosyl-L-methionine-binding positions include 202–203 (GE), serine 236, 259–261 (SLH), and asparagine 338. Cysteine 381 serves as the catalytic S-methylcysteine intermediate.

It belongs to the radical SAM superfamily. RlmN family. [4Fe-4S] cluster is required as a cofactor.

Its subcellular location is the cytoplasm. It catalyses the reaction adenosine(2503) in 23S rRNA + 2 reduced [2Fe-2S]-[ferredoxin] + 2 S-adenosyl-L-methionine = 2-methyladenosine(2503) in 23S rRNA + 5'-deoxyadenosine + L-methionine + 2 oxidized [2Fe-2S]-[ferredoxin] + S-adenosyl-L-homocysteine. The catalysed reaction is adenosine(37) in tRNA + 2 reduced [2Fe-2S]-[ferredoxin] + 2 S-adenosyl-L-methionine = 2-methyladenosine(37) in tRNA + 5'-deoxyadenosine + L-methionine + 2 oxidized [2Fe-2S]-[ferredoxin] + S-adenosyl-L-homocysteine. In terms of biological role, specifically methylates position 2 of adenine 2503 in 23S rRNA and position 2 of adenine 37 in tRNAs. The protein is Probable dual-specificity RNA methyltransferase RlmN of Bifidobacterium longum (strain NCC 2705).